The primary structure comprises 225 residues: ATP-dependent Clp protease proteolytic subunit (225 aa).

Residue serine 123 is the Nucleophile of the active site. Residue histidine 148 is part of the active site.

This sequence belongs to the peptidase S14 family. In terms of assembly, fourteen ClpP subunits assemble into 2 heptameric rings which stack back to back to give a disk-like structure with a central cavity, resembling the structure of eukaryotic proteasomes.

Its subcellular location is the cytoplasm. The catalysed reaction is Hydrolysis of proteins to small peptides in the presence of ATP and magnesium. alpha-casein is the usual test substrate. In the absence of ATP, only oligopeptides shorter than five residues are hydrolyzed (such as succinyl-Leu-Tyr-|-NHMec, and Leu-Tyr-Leu-|-Tyr-Trp, in which cleavage of the -Tyr-|-Leu- and -Tyr-|-Trp bonds also occurs).. Cleaves peptides in various proteins in a process that requires ATP hydrolysis. Has a chymotrypsin-like activity. Plays a major role in the degradation of misfolded proteins. The protein is ATP-dependent Clp protease proteolytic subunit of Chlorobium phaeovibrioides (strain DSM 265 / 1930) (Prosthecochloris vibrioformis (strain DSM 265)).